The chain runs to 214 residues: Cell division protein DamX (214 aa).

Composition is skewed to polar residues over residues glycine 1–glutamine 14 and glutamine 43–proline 53. A disordered region spans residues glycine 1–tyrosine 133. Residues glycine 44–alanine 65 traverse the membrane as a helical segment. 2 stretches are compositionally biased toward low complexity: residues glutamine 78–lysine 97 and serine 110–serine 131. In terms of domain architecture, SPOR spans serine 127 to proline 204.

The protein belongs to the DamX family.

It is found in the cell inner membrane. In terms of biological role, non-essential cell division protein. This chain is Cell division protein DamX, found in Serratia marcescens.